We begin with the raw amino-acid sequence, 245 residues long: Carboxymethylenebutenolidase homolog (245 aa).

At A2 the chain carries N-acetylalanine. K36 carries the post-translational modification N6-acetyllysine. Residues C132, D179, and H212 contribute to the active site. S223 bears the Phosphoserine mark.

Belongs to the dienelactone hydrolase family. In terms of tissue distribution, widely expressed, with highest levels in liver, followed by kidney, small intestine and colon. Present in liver and intestine (at protein level).

The protein localises to the cytoplasm. It localises to the cytosol. Its activity is regulated as follows. Strongly inhibited by p-chloromercuribenzoate (PCMB). Partially inhibited by bis-p-nitrophenylphosphate (BNPP). Not inhibited by DFP, PMSF, eserine or EDTA. In terms of biological role, cysteine hydrolase. Can convert the prodrug olmesartan medoxomil into its pharmacologically active metabolite olmerstatan, an angiotensin receptor blocker, in liver and intestine. May also activate beta-lactam antibiotics faropenem medoxomil and lenampicillin. In Homo sapiens (Human), this protein is Carboxymethylenebutenolidase homolog (CMBL).